The following is a 362-amino-acid chain: tRNA/tmRNA (uracil-C(5))-methyltransferase (362 aa).

The S-adenosyl-L-methionine site is built by Gln182, Tyr210, Asn215, Glu231, and Asp293. The active-site Nucleophile is the Cys318. Glu352 serves as the catalytic Proton acceptor.

The protein belongs to the class I-like SAM-binding methyltransferase superfamily. RNA M5U methyltransferase family. TrmA subfamily.

The catalysed reaction is uridine(54) in tRNA + S-adenosyl-L-methionine = 5-methyluridine(54) in tRNA + S-adenosyl-L-homocysteine + H(+). It catalyses the reaction uridine(341) in tmRNA + S-adenosyl-L-methionine = 5-methyluridine(341) in tmRNA + S-adenosyl-L-homocysteine + H(+). Its function is as follows. Dual-specificity methyltransferase that catalyzes the formation of 5-methyluridine at position 54 (m5U54) in all tRNAs, and that of position 341 (m5U341) in tmRNA (transfer-mRNA). The polypeptide is tRNA/tmRNA (uracil-C(5))-methyltransferase (Neisseria gonorrhoeae (strain ATCC 700825 / FA 1090)).